The sequence spans 912 residues: Phosphoenolpyruvate carboxylase (912 aa).

Catalysis depends on residues histidine 138 and lysine 575.

This sequence belongs to the PEPCase type 1 family. Requires Mg(2+) as cofactor.

The enzyme catalyses oxaloacetate + phosphate = phosphoenolpyruvate + hydrogencarbonate. Forms oxaloacetate, a four-carbon dicarboxylic acid source for the tricarboxylic acid cycle. This is Phosphoenolpyruvate carboxylase from Lactobacillus helveticus (strain DPC 4571).